Here is a 243-residue protein sequence, read N- to C-terminus: MQISYFHVPAEMPQDLRPDAAVVIDVLRATTTIARALHNGAEAVQAFASLEDLRAAAAEWPADARLLLGERGGQMLEGFDLGNSPVAVTPEQVAGKRLFMSTTNGTRALDRVREVPLLLTAALPNREAVAQRVLAKQPSHVAIVGSGWEGAYSLEDSLAAGALGHRLLELDPTGSSAANDELTAAVSLWRQWQSDPEACLRTATHGQRLIRLGDHDADFRCCAGLDQLGVVPTQVEPGVLRAA.

It belongs to the ComB family. Requires Mg(2+) as cofactor.

It catalyses the reaction (2R)-O-phospho-3-sulfolactate + H2O = (2R)-3-sulfolactate + phosphate. In Synechococcus sp. (strain CC9605), this protein is Probable 2-phosphosulfolactate phosphatase.